The sequence spans 735 residues: Disintegrin and metalloproteinase domain-containing protein 2 (735 aa).

The first 16 residues, 1 to 16 (MWRVLFLLSGLGGLRM), serve as a signal peptide directing secretion. A propeptide spanning residues 17–174 (DSNFDSLPVQ…FKLQSVEPQQ (158 aa)) is cleaved from the precursor. Residues Asn122 and Asn220 are each glycosylated (N-linked (GlcNAc...) asparagine). Over 175-686 (DFAKYIEMHV…ENIYHSKPMR (512 aa)) the chain is Extracellular. The Peptidase M12B domain occupies 178–375 (KYIEMHVIVE…QKSQCLHNQP (198 aa)). Intrachain disulfides connect Cys287–Cys370, Cys329–Cys354, Cys331–Cys336, and Cys445–Cys465. N-linked (GlcNAc...) asparagine glycans are attached at residues Asn353, Asn459, and Asn566. Residues 384–473 (QAVCGNAKLE…SCPENHYVQT (90 aa)) enclose the Disintegrin domain. The region spanning 612–645 (LGYDCTTDKCNDRGVCNNKKHCHCSASYLPPDCS) is the EGF-like domain. 3 cysteine pairs are disulfide-bonded: Cys616–Cys627, Cys621–Cys633, and Cys635–Cys644. The helical transmembrane segment at 687–707 (WPFFLFIPFFIIFCVLIAIMV) threads the bilayer. Residues 708-735 (KVNFQRKKWRTEDYSSDEQPESESEPKG) are Cytoplasmic-facing. Ser729 bears the Phosphoserine mark.

In terms of processing, the prodomain and the metalloprotease domain are cleaved during the epididymal maturation of the spermatozoa. As to expression, expressed specifically in spermatogenic cells in the seminiferous cells. Not detected in fetal tissues.

It localises to the membrane. Sperm surface membrane protein that may be involved in sperm-egg plasma membrane adhesion and fusion during fertilization. Could have a direct role in sperm-zona binding or migration of sperm from the uterus into the oviduct. Interactions with egg membrane could be mediated via binding between its disintegrin-like domain to one or more integrins receptors on the egg. This is a non catalytic metalloprotease-like protein. This is Disintegrin and metalloproteinase domain-containing protein 2 (ADAM2) from Homo sapiens (Human).